Consider the following 375-residue polypeptide: Succinyl-diaminopimelate desuccinylase (375 aa).

A Zn(2+)-binding site is contributed by His-66. The active site involves Asp-68. Asp-99 lines the Zn(2+) pocket. Residue Glu-133 is the Proton acceptor of the active site. Zn(2+) contacts are provided by Glu-134, Glu-162, and His-348.

The protein belongs to the peptidase M20A family. DapE subfamily. As to quaternary structure, homodimer. Requires Zn(2+) as cofactor. Co(2+) serves as cofactor.

It carries out the reaction N-succinyl-(2S,6S)-2,6-diaminopimelate + H2O = (2S,6S)-2,6-diaminopimelate + succinate. The protein operates within amino-acid biosynthesis; L-lysine biosynthesis via DAP pathway; LL-2,6-diaminopimelate from (S)-tetrahydrodipicolinate (succinylase route): step 3/3. Its function is as follows. Catalyzes the hydrolysis of N-succinyl-L,L-diaminopimelic acid (SDAP), forming succinate and LL-2,6-diaminopimelate (DAP), an intermediate involved in the bacterial biosynthesis of lysine and meso-diaminopimelic acid, an essential component of bacterial cell walls. The polypeptide is Succinyl-diaminopimelate desuccinylase (Escherichia coli O139:H28 (strain E24377A / ETEC)).